The sequence spans 151 residues: Deoxyuridine 5'-triphosphate nucleotidohydrolase (151 aa).

Residues 70–72, N83, 87–89, and M97 contribute to the substrate site; these read RSG and LID.

The protein belongs to the dUTPase family. Requires Mg(2+) as cofactor.

It carries out the reaction dUTP + H2O = dUMP + diphosphate + H(+). Its pathway is pyrimidine metabolism; dUMP biosynthesis; dUMP from dCTP (dUTP route): step 2/2. Its function is as follows. This enzyme is involved in nucleotide metabolism: it produces dUMP, the immediate precursor of thymidine nucleotides and it decreases the intracellular concentration of dUTP so that uracil cannot be incorporated into DNA. The sequence is that of Deoxyuridine 5'-triphosphate nucleotidohydrolase from Yersinia pseudotuberculosis serotype O:1b (strain IP 31758).